The primary structure comprises 375 residues: Tryptophan dimethylallyltransferase (375 aa).

L-tryptophan contacts are provided by residues 83–84 (IL) and E92. Positions 103, 189, and 191 each coordinate substrate. L-tryptophan is bound by residues Y193 and R246. Positions 259, 261, 263, 345, and 347 each coordinate substrate.

Belongs to the tryptophan dimethylallyltransferase family. Homodimer.

The enzyme catalyses L-tryptophan + dimethylallyl diphosphate = 4-(3-methylbut-2-enyl)-L-tryptophan + diphosphate. It functions in the pathway alkaloid biosynthesis; ergot alkaloid biosynthesis. Tryptophan dimethylallyltransferase; part of the gene cluster that mediates the biosynthesis of fungal ergot alkaloid. DmaW catalyzes the first step of ergot alkaloid biosynthesis by condensing dimethylallyl diphosphate (DMAP) and tryptophan to form 4-dimethylallyl-L-tryptophan. The second step is catalyzed by the methyltransferase easF that methylates 4-dimethylallyl-L-tryptophan in the presence of S-adenosyl-L-methionine, resulting in the formation of 4-dimethylallyl-L-abrine. The catalase easC and the FAD-dependent oxidoreductase easE then transform 4-dimethylallyl-L-abrine to chanoclavine-I which is further oxidized by easD in the presence of NAD(+), resulting in the formation of chanoclavine-I aldehyde. Chanoclavine-I aldehyde is the precursor of ergoamides and ergopeptines in Clavicipitaceae, and clavine-type alcaloids such as fumiclavine in Trichocomaceae. However, the metabolites downstream of chanoclavine-I aldehyde in Arthrodermataceae have not been identified yet. This Trichophyton verrucosum (strain HKI 0517) protein is Tryptophan dimethylallyltransferase.